We begin with the raw amino-acid sequence, 301 residues long: tRNA pseudouridine synthase B (301 aa).

Residue Asp-38 is the Nucleophile of the active site.

This sequence belongs to the pseudouridine synthase TruB family. Type 1 subfamily.

It catalyses the reaction uridine(55) in tRNA = pseudouridine(55) in tRNA. Its function is as follows. Responsible for synthesis of pseudouridine from uracil-55 in the psi GC loop of transfer RNAs. This chain is tRNA pseudouridine synthase B, found in Lacticaseibacillus paracasei (strain ATCC 334 / BCRC 17002 / CCUG 31169 / CIP 107868 / KCTC 3260 / NRRL B-441) (Lactobacillus paracasei).